A 226-amino-acid chain; its full sequence is Thymidylate kinase (226 aa).

16-23 (GIDGAGKT) is a binding site for ATP.

This sequence belongs to the thymidylate kinase family.

It carries out the reaction dTMP + ATP = dTDP + ADP. Its function is as follows. Phosphorylation of dTMP to form dTDP in both de novo and salvage pathways of dTTP synthesis. The protein is Thymidylate kinase of Xanthomonas euvesicatoria pv. vesicatoria (strain 85-10) (Xanthomonas campestris pv. vesicatoria).